Here is a 440-residue protein sequence, read N- to C-terminus: Chromosome partition protein MukF (440 aa).

The leucine-zipper stretch occupies residues 208 to 236 (LSETSGTLRELQDTLEAAGDKLQANLLRI).

Belongs to the MukF family. As to quaternary structure, interacts, and probably forms a ternary complex, with MukE and MukB via its C-terminal region. The complex formation is stimulated by calcium or magnesium. It is required for an interaction between MukE and MukB.

It localises to the cytoplasm. It is found in the nucleoid. In terms of biological role, involved in chromosome condensation, segregation and cell cycle progression. May participate in facilitating chromosome segregation by condensation DNA from both sides of a centrally located replisome during cell division. Not required for mini-F plasmid partitioning. Probably acts via its interaction with MukB and MukE. Overexpression results in anucleate cells. It has a calcium binding activity. The protein is Chromosome partition protein MukF of Yersinia pestis.